Here is an 84-residue protein sequence, read N- to C-terminus: Putative membrane protein insertion efficiency factor (84 aa).

A disordered region spans residues 63–84 (WGGSGYDPVPGADPEHDRRPRG). The segment covering 75-84 (DPEHDRRPRG) has biased composition (basic and acidic residues).

It belongs to the UPF0161 family.

It is found in the cell inner membrane. Its function is as follows. Could be involved in insertion of integral membrane proteins into the membrane. The chain is Putative membrane protein insertion efficiency factor from Cereibacter sphaeroides (strain ATCC 17029 / ATH 2.4.9) (Rhodobacter sphaeroides).